A 241-amino-acid polypeptide reads, in one-letter code: F-box protein At3g22350 (241 aa).

In terms of domain architecture, F-box spans 1-44 (MSDLPLDLVEEILSRVSATSLKRLRSTCKQWNTLFKKRSFSQKH).

The sequence is that of F-box protein At3g22350 from Arabidopsis thaliana (Mouse-ear cress).